A 376-amino-acid polypeptide reads, in one-letter code: Putative 12-oxophytodienoate reductase 2 (376 aa).

Residues 31 to 33, A64, and Q106 each bind FMN; that span reads PLT. 178–181 is a binding site for substrate; sequence HGAH. Y183 (proton donor) is an active-site residue. Residues R230, G301, and 322 to 323 each bind FMN; that span reads GR.

The protein belongs to the NADH:flavin oxidoreductase/NADH oxidase family. It depends on FMN as a cofactor.

Its function is as follows. Putative oxophytodienoate reductase that may be involved in the biosynthesis or metabolism of oxylipin signaling molecules. The protein is Putative 12-oxophytodienoate reductase 2 (OPR2) of Oryza sativa subsp. japonica (Rice).